The following is a 344-amino-acid chain: Fructose-1,6-bisphosphatase class 1 (344 aa).

E90, D109, L111, and D112 together coordinate Mg(2+). Substrate is bound by residues 112 to 115 (DGSS) and N200. E271 provides a ligand contact to Mg(2+).

This sequence belongs to the FBPase class 1 family. In terms of assembly, homotetramer. The cofactor is Mg(2+).

Its subcellular location is the cytoplasm. The enzyme catalyses beta-D-fructose 1,6-bisphosphate + H2O = beta-D-fructose 6-phosphate + phosphate. It participates in carbohydrate biosynthesis; gluconeogenesis. This Nitrobacter vulgaris protein is Fructose-1,6-bisphosphatase class 1.